We begin with the raw amino-acid sequence, 357 residues long: tRNA N6-adenosine threonylcarbamoyltransferase (357 aa).

Residues histidine 120 and histidine 124 each contribute to the Fe cation site. Substrate-binding positions include 143–147 (LVSGG), aspartate 176, glycine 189, and asparagine 289. Position 317 (aspartate 317) interacts with Fe cation.

Belongs to the KAE1 / TsaD family. It depends on Fe(2+) as a cofactor.

It is found in the cytoplasm. The catalysed reaction is L-threonylcarbamoyladenylate + adenosine(37) in tRNA = N(6)-L-threonylcarbamoyladenosine(37) in tRNA + AMP + H(+). In terms of biological role, required for the formation of a threonylcarbamoyl group on adenosine at position 37 (t(6)A37) in tRNAs that read codons beginning with adenine. Is involved in the transfer of the threonylcarbamoyl moiety of threonylcarbamoyl-AMP (TC-AMP) to the N6 group of A37, together with TsaE and TsaB. TsaD likely plays a direct catalytic role in this reaction. This is tRNA N6-adenosine threonylcarbamoyltransferase from Polynucleobacter asymbioticus (strain DSM 18221 / CIP 109841 / QLW-P1DMWA-1) (Polynucleobacter necessarius subsp. asymbioticus).